The chain runs to 559 residues: Glutamine--tRNA ligase (559 aa).

The 'HIGH' region signature appears at 44–54 (PEPNGYLHIGH). Residues 45–47 (EPN) and 51–57 (HIGHAKS) contribute to the ATP site. L-glutamine contacts are provided by D77 and Y222. ATP is bound by residues T241 and 272-273 (RL). The 'KMSKS' region motif lies at 279–283 (LTSKR).

The protein belongs to the class-I aminoacyl-tRNA synthetase family. Monomer.

Its subcellular location is the cytoplasm. The catalysed reaction is tRNA(Gln) + L-glutamine + ATP = L-glutaminyl-tRNA(Gln) + AMP + diphosphate. The sequence is that of Glutamine--tRNA ligase from Pasteurella multocida (strain Pm70).